The following is a 325-amino-acid chain: Putative gluconeogenesis factor (325 aa).

Belongs to the gluconeogenesis factor family.

The protein localises to the cytoplasm. Its function is as follows. Required for morphogenesis under gluconeogenic growth conditions. This chain is Putative gluconeogenesis factor, found in Streptococcus pneumoniae serotype 4 (strain ATCC BAA-334 / TIGR4).